Consider the following 348-residue polypeptide: NADH-quinone oxidoreductase subunit H (348 aa).

The next 8 membrane-spanning stretches (helical) occupy residues 10 to 30, 82 to 102, 115 to 135, 161 to 181, 199 to 219, 251 to 271, 287 to 307, and 322 to 342; these read LPFLIIVGKTLLLLVVLLVLV, GVFLLAPFVSATLALSTWAVI, VGLLYILAISSLEVYGVIMGG, IGFVLVTVILISGSLDLTTIV, FLDWNWLVLFPMFIIFFISAL, LFFLGEYVAIVLMCALTTILF, IPGVIWFVLKVCFVFFWFAIV, and LGWKVFLPLSLAMVVITAAFL.

It belongs to the complex I subunit 1 family. NDH-1 is composed of 14 different subunits. Subunits NuoA, H, J, K, L, M, N constitute the membrane sector of the complex.

It localises to the cell inner membrane. The enzyme catalyses a quinone + NADH + 5 H(+)(in) = a quinol + NAD(+) + 4 H(+)(out). Its function is as follows. NDH-1 shuttles electrons from NADH, via FMN and iron-sulfur (Fe-S) centers, to quinones in the respiratory chain. The immediate electron acceptor for the enzyme in this species is believed to be ubiquinone. Couples the redox reaction to proton translocation (for every two electrons transferred, four hydrogen ions are translocated across the cytoplasmic membrane), and thus conserves the redox energy in a proton gradient. This subunit may bind ubiquinone. The sequence is that of NADH-quinone oxidoreductase subunit H from Bartonella tribocorum (strain CIP 105476 / IBS 506).